The following is a 300-amino-acid chain: Virginiamycin B lyase (300 aa).

His-231 serves as a coordination point for substrate. Glu-270 lines the Mg(2+) pocket. Catalysis depends on His-272, which acts as the Proton acceptor. Glu-287 provides a ligand contact to Mg(2+).

The protein belongs to the Vgb family. Monomer. Requires Mg(2+) as cofactor.

In terms of biological role, inactivates the type B streptogramin antibiotics by linearizing the lactone ring at the ester linkage, generating a free phenylglycine carboxylate and converting the threonyl moiety into 2-amino-butenoic acid. The protein is Virginiamycin B lyase of Saccharopolyspora erythraea (strain ATCC 11635 / DSM 40517 / JCM 4748 / NBRC 13426 / NCIMB 8594 / NRRL 2338).